Here is a 267-residue protein sequence, read N- to C-terminus: Cilia- and flagella-associated protein 300 (267 aa).

Belongs to the CFAP300 family. In terms of assembly, interacts with DNAAF2. In terms of tissue distribution, expressed in the left-right organiser (LRO) node at 8.25 dpc.

The protein localises to the cytoplasm. It is found in the cytoskeleton. The protein resides in the cilium axoneme. Its function is as follows. Cilium- and flagellum-specific protein that plays a role in axonemal structure organization and motility. May play a role in outer and inner dynein arm assembly. This is Cilia- and flagella-associated protein 300 from Mus musculus (Mouse).